A 467-amino-acid polypeptide reads, in one-letter code: uncharacterized protein (467 aa).

The residue at position 290 (Lys-290) is an N6-(pyridoxal phosphate)lysine.

This sequence belongs to the class-III pyridoxal-phosphate-dependent aminotransferase family. It depends on pyridoxal 5'-phosphate as a cofactor.

This is an uncharacterized protein from Sinorhizobium fredii (strain NBRC 101917 / NGR234).